Here is a 150-residue protein sequence, read N- to C-terminus: MAEIPEMTVQELKALMDSGAQDYVLVDVRNPNEYEIARIPGSVLVPLSEIENGPGVEKIRSLLNGHRLLVHCKMGGPLPKRWASSKRLALRESISKGASTLGVRKSTPAYPPTNPRLGAGRRKGMLRYMNFLEEKHALSRAIAALPRITT.

One can recognise a Rhodanese domain in the interval 19–93 (GAQDYVLVDV…SSKRLALRES (75 aa)).

This is an uncharacterized protein from Synechococcus elongatus.